We begin with the raw amino-acid sequence, 745 residues long: Polyribonucleotide nucleotidyltransferase (745 aa).

The Mg(2+) site is built by aspartate 487 and aspartate 493. In terms of domain architecture, KH spans proline 554 to isoleucine 613. One can recognise an S1 motif domain in the interval glycine 623–lysine 691. The disordered stretch occupies residues lysine 691–asparagine 745. The span at asparagine 707 to aspartate 719 shows a compositional bias: basic and acidic residues.

The protein belongs to the polyribonucleotide nucleotidyltransferase family. Mg(2+) serves as cofactor.

Its subcellular location is the cytoplasm. The enzyme catalyses RNA(n+1) + phosphate = RNA(n) + a ribonucleoside 5'-diphosphate. Involved in mRNA degradation. Catalyzes the phosphorolysis of single-stranded polyribonucleotides processively in the 3'- to 5'-direction. This is Polyribonucleotide nucleotidyltransferase from Rickettsia massiliae (strain Mtu5).